The following is a 402-amino-acid chain: Secreted RxLR effector protein 73 (402 aa).

A signal peptide spans 1-23 (MRLLHVVVATVSLTGAITSLIAA). N27 carries N-linked (GlcNAc...) asparagine glycosylation. The RxLR signature appears at 104 to 107 (RVLR). N-linked (GlcNAc...) asparagine glycosylation is found at N111, N134, N143, N165, and N286.

The protein belongs to the RxLR effector family.

It is found in the secreted. It localises to the host cell. In terms of biological role, secreted effector that completely suppresses the host cell death induced by cell death-inducing proteins. This Plasmopara viticola (Downy mildew of grapevine) protein is Secreted RxLR effector protein 73.